The chain runs to 298 residues: Pyridoxal kinase PdxY (298 aa).

Serine 17 is a binding site for substrate. Residues aspartate 119 and glutamate 156 each coordinate ATP. Position 234 (aspartate 234) interacts with substrate.

Belongs to the pyridoxine kinase family. PdxY subfamily. Homodimer. Requires Mg(2+) as cofactor.

It catalyses the reaction pyridoxal + ATP = pyridoxal 5'-phosphate + ADP + H(+). It participates in cofactor metabolism; pyridoxal 5'-phosphate salvage; pyridoxal 5'-phosphate from pyridoxal: step 1/1. Functionally, pyridoxal kinase involved in the salvage pathway of pyridoxal 5'-phosphate (PLP). Catalyzes the phosphorylation of pyridoxal to PLP. The chain is Pyridoxal kinase PdxY from Deinococcus radiodurans (strain ATCC 13939 / DSM 20539 / JCM 16871 / CCUG 27074 / LMG 4051 / NBRC 15346 / NCIMB 9279 / VKM B-1422 / R1).